Here is a 250-residue protein sequence, read N- to C-terminus: MKICLIDETGAGDGALSVLASRWGLEHDEDNLMALVLTPEHLELRKRDEPKLGGIFVDFVGGTMAHRRKFGGGRGEAVAKAVGIKGDYLPDVVDATAGLGRDAFVLASVGCRVRMLERNPVVAALLDDGLARGYADAEIGGWLQERLQLIHASSLTALTDITPRPQVVYLDPMFPHKQKSALVKKEMRVFQSLVGPDLDADGLLEPARLLATKRVVVKRPDYAPPLANVATPNAVVTKGHRFDIYAGTPV.

S-adenosyl-L-methionine-binding positions include 101–102 (RD), 117–118 (ER), 153–154 (SS), and D171.

Belongs to the methyltransferase superfamily. RsmJ family.

Its subcellular location is the cytoplasm. It carries out the reaction guanosine(1516) in 16S rRNA + S-adenosyl-L-methionine = N(2)-methylguanosine(1516) in 16S rRNA + S-adenosyl-L-homocysteine + H(+). Functionally, specifically methylates the guanosine in position 1516 of 16S rRNA. This chain is Ribosomal RNA small subunit methyltransferase J, found in Escherichia fergusonii (strain ATCC 35469 / DSM 13698 / CCUG 18766 / IAM 14443 / JCM 21226 / LMG 7866 / NBRC 102419 / NCTC 12128 / CDC 0568-73).